A 134-amino-acid chain; its full sequence is Transcription antitermination protein NusB (134 aa).

The protein belongs to the NusB family.

Involved in transcription antitermination. Required for transcription of ribosomal RNA (rRNA) genes. Binds specifically to the boxA antiterminator sequence of the ribosomal RNA (rrn) operons. The protein is Transcription antitermination protein NusB of Shewanella baltica (strain OS223).